The following is a 737-amino-acid chain: Lysyl oxidase homolog 2A (737 aa).

Residues Met-1–Ala-18 form the signal peptide. 4 SRCR domains span residues Leu-29–Asn-130, Ile-159–Val-270, Val-294–Asn-393, and Ile-403–Ser-512. Cystine bridges form between Cys-55-Cys-119, Cys-68-Cys-129, Cys-99-Cys-109, Cys-188-Cys-259, Cys-201-Cys-269, Cys-235-Cys-245, Cys-319-Cys-382, Cys-332-Cys-392, and Cys-363-Cys-373. Asn-256 is a glycosylation site (N-linked (GlcNAc...) asparagine). A glycan (N-linked (GlcNAc...) asparagine) is linked at Asn-423. Intrachain disulfides connect Cys-432/Cys-498, Cys-445/Cys-511, and Cys-479/Cys-489. Residues Pro-516 to Ser-718 are lysyl-oxidase like. Positions 517 and 518 each coordinate Ca(2+). 4 disulfide bridges follow: Cys-541-Cys-592, Cys-547-Cys-662, Cys-624-Cys-640, and Cys-630-Cys-652. 3 residues coordinate Cu cation: His-593, His-595, and His-597. N-linked (GlcNAc...) asparagine glycosylation is present at Asn-611. The lysine tyrosylquinone (Lys-Tyr) cross-link spans Lys-620 to Tyr-656. A 2',4',5'-topaquinone modification is found at Tyr-656. Residues Glu-689, Asp-691, Asn-694, and Asn-695 each contribute to the Ca(2+) site. The cysteines at positions 699 and 713 are disulfide-linked.

This sequence belongs to the lysyl oxidase family. Requires Cu cation as cofactor. It depends on lysine tyrosylquinone residue as a cofactor. In terms of processing, the lysine tyrosylquinone cross-link (LTQ) is generated by condensation of the epsilon-amino group of a lysine with a topaquinone produced by oxidation of tyrosine.

It localises to the secreted. It is found in the extracellular space. The protein resides in the extracellular matrix. Its subcellular location is the basement membrane. The protein localises to the nucleus. It localises to the chromosome. It is found in the endoplasmic reticulum. It catalyses the reaction L-lysyl-[protein] + O2 + H2O = (S)-2-amino-6-oxohexanoyl-[protein] + H2O2 + NH4(+). In terms of biological role, mediates the post-translational oxidative deamination of lysine residues on target proteins leading to the formation of deaminated lysine (allysine). Acts as a transcription corepressor and specifically mediates deamination of trimethylated 'Lys-4' of histone H3 (H3K4me3), a specific tag for epigenetic transcriptional activation. Shows no activity against histone H3 when it is trimethylated on 'Lys-9' (H3K9me3) or 'Lys-27' (H3K27me3) or when 'Lys-4' is monomethylated (H3K4me1) or dimethylated (H3K4me2). Also mediates deamination of methylated TAF10, a member of the transcription factor IID (TFIID) complex, which induces release of TAF10 from promoters, leading to inhibition of TFIID-dependent transcription. LOXL2-mediated deamination of TAF10 results in transcriptional repression of genes required for embryonic stem cell pluripotency. Involved in epithelial to mesenchymal transition (EMT) and participates in repression of E-cadherin, probably by mediating deamination of histone H3. When secreted into the extracellular matrix, promotes cross-linking of extracellular matrix proteins by mediating oxidative deamination of peptidyl lysine residues in precursors to fibrous collagen and elastin. Acts as a regulator of sprouting angiogenesis, probably via collagen IV scaffolding. Acts as a regulator of chondrocyte differentiation, probably by regulating expression of factors that control chondrocyte differentiation. Required with loxl2b for correct expression of Sox2 and for neural differentiation. The chain is Lysyl oxidase homolog 2A (loxl2a) from Danio rerio (Zebrafish).